The following is a 120-amino-acid chain: Ribonuclease P protein component (120 aa).

Belongs to the RnpA family. Consists of a catalytic RNA component (M1 or rnpB) and a protein subunit.

It catalyses the reaction Endonucleolytic cleavage of RNA, removing 5'-extranucleotides from tRNA precursor.. Its function is as follows. RNaseP catalyzes the removal of the 5'-leader sequence from pre-tRNA to produce the mature 5'-terminus. It can also cleave other RNA substrates such as 4.5S RNA. The protein component plays an auxiliary but essential role in vivo by binding to the 5'-leader sequence and broadening the substrate specificity of the ribozyme. The protein is Ribonuclease P protein component of Dehalococcoides mccartyi (strain ATCC BAA-2266 / KCTC 15142 / 195) (Dehalococcoides ethenogenes (strain 195)).